A 179-amino-acid chain; its full sequence is Cytochrome b6-f complex iron-sulfur subunit 1 (179 aa).

A helical membrane pass occupies residues 21-43 (LLTFGTVTGVALGALYPVVNYFI). A Rieske domain is found at 61 to 162 (GNDVSVSKFL…AKTENDKIVL (102 aa)). Residues Cys108, His110, Cys126, and His129 each contribute to the [2Fe-2S] cluster site. Cys113 and Cys128 are disulfide-bonded.

This sequence belongs to the Rieske iron-sulfur protein family. As to quaternary structure, the 4 large subunits of the cytochrome b6-f complex are cytochrome b6, subunit IV (17 kDa polypeptide, PetD), cytochrome f and the Rieske protein, while the 4 small subunits are PetG, PetL, PetM and PetN. The complex functions as a dimer. Requires [2Fe-2S] cluster as cofactor.

The protein resides in the cellular thylakoid membrane. It carries out the reaction 2 oxidized [plastocyanin] + a plastoquinol + 2 H(+)(in) = 2 reduced [plastocyanin] + a plastoquinone + 4 H(+)(out). Component of the cytochrome b6-f complex, which mediates electron transfer between photosystem II (PSII) and photosystem I (PSI), cyclic electron flow around PSI, and state transitions. In Nostoc sp. (strain PCC 7120 / SAG 25.82 / UTEX 2576), this protein is Cytochrome b6-f complex iron-sulfur subunit 1.